Consider the following 60-residue polypeptide: L-amino-acid oxidase (60 aa).

1-4 is an FAD binding site; the sequence is GPMR. Arginine 4 is a substrate binding site.

It belongs to the flavin monoamine oxidase family. FIG1 subfamily. Homodimer; non-covalently linked. It depends on FAD as a cofactor. In terms of processing, contains 2 disulfide bonds. Post-translationally, N-glycosylated. As to expression, expressed by the venom gland.

It localises to the secreted. The enzyme catalyses an L-alpha-amino acid + O2 + H2O = a 2-oxocarboxylate + H2O2 + NH4(+). In terms of biological role, catalyzes an oxidative deamination of predominantly hydrophobic and aromatic L-amino acids, thus producing hydrogen peroxide that may contribute to the diverse toxic effects of this enzyme. Exhibits diverse biological activities, such as hemorrhage, hemolysis, edema, apoptosis of vascular endothelial cells or tumor cell lines, antibacterial and antiparasitic activities, as well as regulation of platelet aggregation. Effects of snake L-amino oxidases on platelets are controversial, since they either induce aggregation or inhibit agonist-induced aggregation. These different effects are probably due to different experimental conditions. This is L-amino-acid oxidase from Bitis gabonica (Gaboon adder).